The chain runs to 281 residues: MAIRKLNPTTNGTRNMSILDYKTNLTGHAPEKSLMKILKKNSGRNNRGVITTRHKGGREKRFYRLVDFKRNKDNIEAIVKTIEYDPNRSANISLVTYLDGEKRYILSPKGIKVGQRIVSGENVDIIVGNSLELANIPEGTNIHNIELQPKGGGILARSAGSYAQILGKEESGKYVLIRLKSGEVRKVFAKCRATIGIVGNEEHSLVNIGKAGRNRHKGIRPTVRGSVMNPIDHPHGGGEGKQPIGRKAPLTPWGKKALGVKTRDNKKSSTKLIIRRRKESK.

Residues 213 to 281 form a disordered region; that stretch reads RNRHKGIRPT…LIIRRRKESK (69 aa).

Belongs to the universal ribosomal protein uL2 family. Part of the 50S ribosomal subunit. Forms a bridge to the 30S subunit in the 70S ribosome.

In terms of biological role, one of the primary rRNA binding proteins. Required for association of the 30S and 50S subunits to form the 70S ribosome, for tRNA binding and peptide bond formation. It has been suggested to have peptidyltransferase activity; this is somewhat controversial. Makes several contacts with the 16S rRNA in the 70S ribosome. This is Large ribosomal subunit protein uL2 from Mycoplasmopsis pulmonis (strain UAB CTIP) (Mycoplasma pulmonis).